The sequence spans 160 residues: Cytochrome b6-f complex subunit 4 (160 aa).

The next 4 helical transmembrane spans lie at 36-56 (LLYI…GLAV), 68-88 (PFAT…FQIL), 95-115 (FFGV…PFLE), and 131-151 (SVFL…VLPI).

Belongs to the cytochrome b family. PetD subfamily. As to quaternary structure, the 4 large subunits of the cytochrome b6-f complex are cytochrome b6, subunit IV (17 kDa polypeptide, petD), cytochrome f and the Rieske protein, while the 4 small subunits are petG, petL, petM and petN. The complex functions as a dimer.

Its subcellular location is the plastid. The protein localises to the chloroplast thylakoid membrane. Its function is as follows. Component of the cytochrome b6-f complex, which mediates electron transfer between photosystem II (PSII) and photosystem I (PSI), cyclic electron flow around PSI, and state transitions. This Welwitschia mirabilis (Tree tumbo) protein is Cytochrome b6-f complex subunit 4.